The following is a 188-amino-acid chain: Molybdopterin synthase catalytic subunit (188 aa).

The span at 1 to 14 (MTTQPPQDQTSTTP) shows a compositional bias: low complexity. A disordered region spans residues 1–23 (MTTQPPQDQTSTTPSLPPHLDPT). Residues 134–135 (HR), Lys150, and 157–159 (KRE) contribute to the substrate site.

It belongs to the MoaE family. MOCS2B subfamily. Heterotetramer; composed of 2 small (MOCS2A) and 2 large (MOCS2B) subunits.

The protein resides in the cytoplasm. It catalyses the reaction 2 [molybdopterin-synthase sulfur-carrier protein]-C-terminal-Gly-aminoethanethioate + cyclic pyranopterin phosphate + H2O = molybdopterin + 2 [molybdopterin-synthase sulfur-carrier protein]-C-terminal Gly-Gly + 2 H(+). It participates in cofactor biosynthesis; molybdopterin biosynthesis. Catalytic subunit of the molybdopterin synthase complex, a complex that catalyzes the conversion of precursor Z into molybdopterin. Acts by mediating the incorporation of 2 sulfur atoms from thiocarboxylated MOCS2A into precursor Z to generate a dithiolene group. This Neosartorya fischeri (strain ATCC 1020 / DSM 3700 / CBS 544.65 / FGSC A1164 / JCM 1740 / NRRL 181 / WB 181) (Aspergillus fischerianus) protein is Molybdopterin synthase catalytic subunit.